The primary structure comprises 253 residues: Fatty acid elongase 5 (253 aa).

The next 7 membrane-spanning stretches (helical) occupy residues 24–44 (IFVS…LVII), 60–80 (IMMI…ISLA), 100–120 (FWIF…VLMI), 127–147 (QLSF…GLLL), 150–170 (GIGN…HFLM), 188–208 (ILTK…SLAP), and 214–234 (FALQ…ILFL). The short motif at 132-136 (HIYHH) is the HxxHH motif element. Residue H135 is the Nucleophile of the active site.

The protein belongs to the ELO family.

It localises to the membrane. The catalysed reaction is an acyl-CoA + malonyl-CoA + H(+) = a 3-oxoacyl-CoA + CO2 + CoA. It functions in the pathway lipid metabolism; polyunsaturated fatty acid biosynthesis. Its function is as follows. Involved in the synthesis of fatty acids. Elongates C20 polyunsaturated fatty acids (PUFAs) with a preference for n-6 PUFAs. The polypeptide is Fatty acid elongase 5 (Trypanosoma cruzi (strain CL Brener)).